A 301-amino-acid polypeptide reads, in one-letter code: Probable alpha-L-glutamate ligase 1 (301 aa).

The 184-residue stretch at 104–287 (MQLMSRRGIG…VAGAIIEFVE (184 aa)) folds into the ATP-grasp domain. Residues K141, 178–179 (EY), D187, and 211–213 (RSN) each bind ATP. Mg(2+) is bound by residues D248, E260, and N262. The Mn(2+) site is built by D248, E260, and N262.

This sequence belongs to the RimK family. It depends on Mg(2+) as a cofactor. Requires Mn(2+) as cofactor.

In Shewanella putrefaciens (strain CN-32 / ATCC BAA-453), this protein is Probable alpha-L-glutamate ligase 1.